The primary structure comprises 448 residues: Bifunctional protein GlmU (448 aa).

The tract at residues 1-232 is pyrophosphorylase; that stretch reads MSDRSLLVVV…ADEVAGVNSR (232 aa). UDP-N-acetyl-alpha-D-glucosamine contacts are provided by residues 11–14, Lys25, Gln78, and 83–84; these read LAAG and GT. Asp108 is a binding site for Mg(2+). UDP-N-acetyl-alpha-D-glucosamine is bound by residues Gly144, Glu158, Asn173, and Asn230. Asn230 lines the Mg(2+) pocket. The segment at 233–253 is linker; that stretch reads VQLAEAEAILQRRLRLAAMAG. Residues 254 to 448 are N-acetyltransferase; sequence GATLVAPETV…FRAARSKPKG (195 aa). UDP-N-acetyl-alpha-D-glucosamine-binding residues include Arg319 and Lys337. The active-site Proton acceptor is His349. UDP-N-acetyl-alpha-D-glucosamine is bound by residues Tyr352 and Asn363. Acetyl-CoA-binding positions include Ala366, 372 to 373, Thr409, and Arg426; that span reads NY.

In the N-terminal section; belongs to the N-acetylglucosamine-1-phosphate uridyltransferase family. The protein in the C-terminal section; belongs to the transferase hexapeptide repeat family. As to quaternary structure, homotrimer. Mg(2+) is required as a cofactor.

It localises to the cytoplasm. It catalyses the reaction alpha-D-glucosamine 1-phosphate + acetyl-CoA = N-acetyl-alpha-D-glucosamine 1-phosphate + CoA + H(+). The enzyme catalyses N-acetyl-alpha-D-glucosamine 1-phosphate + UTP + H(+) = UDP-N-acetyl-alpha-D-glucosamine + diphosphate. Its pathway is nucleotide-sugar biosynthesis; UDP-N-acetyl-alpha-D-glucosamine biosynthesis; N-acetyl-alpha-D-glucosamine 1-phosphate from alpha-D-glucosamine 6-phosphate (route II): step 2/2. It functions in the pathway nucleotide-sugar biosynthesis; UDP-N-acetyl-alpha-D-glucosamine biosynthesis; UDP-N-acetyl-alpha-D-glucosamine from N-acetyl-alpha-D-glucosamine 1-phosphate: step 1/1. It participates in bacterial outer membrane biogenesis; LPS lipid A biosynthesis. Functionally, catalyzes the last two sequential reactions in the de novo biosynthetic pathway for UDP-N-acetylglucosamine (UDP-GlcNAc). The C-terminal domain catalyzes the transfer of acetyl group from acetyl coenzyme A to glucosamine-1-phosphate (GlcN-1-P) to produce N-acetylglucosamine-1-phosphate (GlcNAc-1-P), which is converted into UDP-GlcNAc by the transfer of uridine 5-monophosphate (from uridine 5-triphosphate), a reaction catalyzed by the N-terminal domain. The sequence is that of Bifunctional protein GlmU from Xanthobacter autotrophicus (strain ATCC BAA-1158 / Py2).